The sequence spans 570 residues: Fibropellin-3 (570 aa).

A signal peptide spans 1 to 17; sequence MKVSLLAVLLLSIVAAT. The region spanning 18–55 is the EGF-like 1 domain; sequence YGQGECGSNPCENGSVCRDGEGTYICECQMGYDGQNCD. 4 disulfides stabilise this stretch: Cys23–Cys34, Cys28–Cys43, Cys45–Cys54, and Cys62–Cys88. Asn30 carries N-linked (GlcNAc...) asparagine glycosylation. The region spanning 62-175 is the CUB domain; it reads CGYNIFESTG…RKGFRITFSS (114 aa). Asn136 is a glycosylation site (N-linked (GlcNAc...) asparagine). In terms of domain architecture, EGF-like 2; calcium-binding spans 176-212; sequence DGDDCTPNPCLNGATCVDQVNDYQCICAPGFTGDNCE. Disulfide bonds link Cys180-Cys191, Cys185-Cys200, Cys202-Cys211, Cys218-Cys229, Cys223-Cys238, Cys240-Cys249, Cys256-Cys267, Cys261-Cys276, Cys278-Cys287, Cys294-Cys305, Cys299-Cys314, Cys316-Cys325, Cys332-Cys343, Cys337-Cys352, Cys354-Cys363, Cys370-Cys381, Cys375-Cys390, Cys392-Cys401, Cys408-Cys419, Cys413-Cys428, Cys430-Cys439, and Cys445-Cys521. Residues 214 to 250 form the EGF-like 3; calcium-binding domain; the sequence is DIDECASAPCRNGGACVDQVNGYTCNCIPGFNGVNCE. The region spanning 252–288 is the EGF-like 4; calcium-binding domain; sequence NINECASIPCLNGGICVDGINQFACTCLPGYTGILCE. The 37-residue stretch at 290–326 folds into the EGF-like 5; calcium-binding domain; sequence DINECASSPCQNGGSCTDAVNRYTCDCRAGFTGSNCE. The EGF-like 6; calcium-binding domain maps to 328-364; it reads NINECASSPCLNGGSCLDGVDGYVCQCLPNYTGTHCE. Residue Asn357 is glycosylated (N-linked (GlcNAc...) asparagine). An EGF-like 7 domain is found at 366–402; it reads SLDACASLPCQNGGVCTNVGGDYVCECLPGYTGINCE. Residues 404 to 440 form the EGF-like 8; calcium-binding domain; it reads DINECASLPCQNGGECINGIAMYICQCRQGYAGVNCE. Positions 443 to 562 constitute an Avidin-like domain; sequence GFCDLEGVWF…GQDKWTRYEQ (120 aa).

As to quaternary structure, homotetramer.

Its subcellular location is the secreted. It localises to the extracellular space. Functionally, forms the apical lamina, a component of the extracellular matrix. The protein is Fibropellin-3 (EGF3) of Strongylocentrotus purpuratus (Purple sea urchin).